The chain runs to 134 residues: Replication enhancer protein (134 aa).

This sequence belongs to the geminiviridae replication enhancer protein family. Homooligomer. Interacts with the replication-associated protein (REP). Interacts with host proliferating cell nuclear antigen (PCNA). Interacts with host retinoblastoma-related protein 1 (RBR1), and may thereby deregulate the host cell cycle. Oligomerization and interaction with PCNA are necessary for optimal replication enhancement.

Increases viral DNA accumulation. Enhances infectivity and symptom expression. This Tomato leaf curl virus (strain Australia) (ToLCV) protein is Replication enhancer protein.